A 203-amino-acid polypeptide reads, in one-letter code: Large ribosomal subunit protein bL25 (203 aa).

Belongs to the bacterial ribosomal protein bL25 family. CTC subfamily. Part of the 50S ribosomal subunit; part of the 5S rRNA/L5/L18/L25 subcomplex. Contacts the 5S rRNA. Binds to the 5S rRNA independently of L5 and L18.

Functionally, this is one of the proteins that binds to the 5S RNA in the ribosome where it forms part of the central protuberance. The sequence is that of Large ribosomal subunit protein bL25 from Chlorobium phaeovibrioides (strain DSM 265 / 1930) (Prosthecochloris vibrioformis (strain DSM 265)).